A 79-amino-acid chain; its full sequence is Large ribosomal subunit protein uL22 (79 aa).

It belongs to the universal ribosomal protein uL22 family. Part of the 50S ribosomal subunit.

Its function is as follows. This protein binds specifically to 23S rRNA; its binding is stimulated by other ribosomal proteins, e.g. L4, L17, and L20. It is important during the early stages of 50S assembly. It makes multiple contacts with different domains of the 23S rRNA in the assembled 50S subunit and ribosome. In terms of biological role, the globular domain of the protein is located near the polypeptide exit tunnel on the outside of the subunit, while an extended beta-hairpin is found that lines the wall of the exit tunnel in the center of the 70S ribosome. This chain is Large ribosomal subunit protein uL22 (rplV), found in Prunus armeniaca phytoplasma.